A 1373-amino-acid chain; its full sequence is DNA-directed RNA polymerase subunit beta (1373 aa).

It belongs to the RNA polymerase beta chain family. In terms of assembly, the RNAP catalytic core consists of 2 alpha, 1 beta, 1 beta' and 1 omega subunit. When a sigma factor is associated with the core the holoenzyme is formed, which can initiate transcription.

The enzyme catalyses RNA(n) + a ribonucleoside 5'-triphosphate = RNA(n+1) + diphosphate. In terms of biological role, DNA-dependent RNA polymerase catalyzes the transcription of DNA into RNA using the four ribonucleoside triphosphates as substrates. This is DNA-directed RNA polymerase subunit beta from Rickettsia akari (strain Hartford).